The chain runs to 711 residues: Consortin (711 aa).

Disordered stretches follow at residues 1 to 157 (MDDS…NDPP), 294 to 332 (AVGT…GCHQ), 370 to 389 (ETAG…KDSS), 394 to 432 (PPTE…PGLI), and 457 to 496 (PRDQ…ESAL). At 1–650 (MDDSDPPTYS…LEQDEVGGGS (650 aa)) the chain is on the cytoplasmic side. A compositionally biased stretch (polar residues) spans 63–77 (VSEQDSLNNNESFPS). Basic residues predominate over residues 109 to 120 (PAKRSPRAKKSS). Composition is skewed to basic and acidic residues over residues 396–407 (TEDHCGVARDPK) and 457–471 (PRDQ…EPRQ). Residues 478 to 487 (DGKSAQSQAG) are compositionally biased toward polar residues. The helical transmembrane segment at 651 to 671 (CILLILLCIATVFLSVGGTAL) threads the bilayer. Over 672–711 (YCTLGNIESPVCTDFADNVDFYYTKLLQGVAGLKHWVYLS) the chain is Extracellular.

The protein belongs to the CNST family. Interacts with connexins GJA1/CX43, GJB1/CX32, GJB2/CX26, GJB3/CX31, GJB6/CX30 and GJC1/CX45. Also interacts with GGA1 and GGA2. Does not interact with PANX1.

It localises to the cell membrane. It is found in the golgi apparatus. Its subcellular location is the trans-Golgi network membrane. The protein resides in the cytoplasmic vesicle. The protein localises to the secretory vesicle. Functionally, required for targeting of connexins to the plasma membrane. This Mus musculus (Mouse) protein is Consortin (Cnst).